The following is a 361-amino-acid chain: D-alanine--D-alanine ligase (361 aa).

The ATP-grasp domain maps to 140–345 (KHLFAQAGLD…YAELIEKLVA (206 aa)). Residue 173 to 228 (EGELGYPCFVKPANLGSSVGISKCRSREELDQAFELAFQYDRKIVVEEGVIGREIE) participates in ATP binding. The Mg(2+) site is built by aspartate 299, glutamate 312, and asparagine 314.

This sequence belongs to the D-alanine--D-alanine ligase family. The cofactor is Mg(2+). Mn(2+) is required as a cofactor.

It is found in the cytoplasm. It catalyses the reaction 2 D-alanine + ATP = D-alanyl-D-alanine + ADP + phosphate + H(+). The protein operates within cell wall biogenesis; peptidoglycan biosynthesis. Functionally, cell wall formation. The protein is D-alanine--D-alanine ligase of Bacillus licheniformis (strain ATCC 14580 / DSM 13 / JCM 2505 / CCUG 7422 / NBRC 12200 / NCIMB 9375 / NCTC 10341 / NRRL NRS-1264 / Gibson 46).